The following is a 174-amino-acid chain: MIGEHPYVKWAIRVIENYVRYGKVIEPDESVPEELFKRRAGAFVTLHKTDGSLRGCIGTYLPTKPNLALEIRDNAIAAATQDPRFPPVSPDELDDIVVHVDILSPPEPVRDISELDPKKYGVIVVKGWRRGLLLPDIEGVDTVEEQLRIAKLKAGIPEWDDDVEIYRFTVERYK.

One can recognise an AMMECR1 domain in the interval 2–174 (IGEHPYVKWA…IYRFTVERYK (173 aa)).

This Thermotoga maritima (strain ATCC 43589 / DSM 3109 / JCM 10099 / NBRC 100826 / MSB8) protein is Protein TM_1551.